Here is a 283-residue protein sequence, read N- to C-terminus: Aquaporin PIP2-5 (283 aa).

Transmembrane regions (helical) follow at residues A37–I57 and C74–V94. Positions N106–A108 match the NPA 1 motif. 3 helical membrane passes run I125–F145, G167–A187, and V199–I219. Residues N227 to A229 carry the NPA 2 motif. A helical membrane pass occupies residues I249–L269.

The protein belongs to the MIP/aquaporin (TC 1.A.8) family. PIP (TC 1.A.8.11) subfamily. As to expression, expressed in roots.

It localises to the cell membrane. Functionally, water channel required to facilitate the transport of water across cell membrane. May play a role in root water uptake. This chain is Aquaporin PIP2-5 (PIP2-5), found in Oryza sativa subsp. japonica (Rice).